Here is a 318-residue protein sequence, read N- to C-terminus: NADH-ubiquinone oxidoreductase chain 1 (318 aa).

The next 9 membrane-spanning stretches (helical) occupy residues F2–L22, P37–I57, L69–M89, L100–G120, V136–M156, H171–A191, I231–F251, E253–V273, and F293–G313.

Belongs to the complex I subunit 1 family. As to quaternary structure, core subunit of respiratory chain NADH dehydrogenase (Complex I) which is composed of 45 different subunits.

The protein resides in the mitochondrion inner membrane. It carries out the reaction a ubiquinone + NADH + 5 H(+)(in) = a ubiquinol + NAD(+) + 4 H(+)(out). Functionally, core subunit of the mitochondrial membrane respiratory chain NADH dehydrogenase (Complex I) which catalyzes electron transfer from NADH through the respiratory chain, using ubiquinone as an electron acceptor. Essential for the catalytic activity and assembly of complex I. The protein is NADH-ubiquinone oxidoreductase chain 1 (MT-ND1) of Euphractus sexcinctus (Six-banded armadillo).